Reading from the N-terminus, the 741-residue chain is Cysteine--tRNA ligase, cytoplasmic (741 aa).

Position 46 (C46) interacts with Zn(2+). The 'HIGH' region motif lies at P48–H58. The residue at position 297 (S297) is a Phosphoserine. Positions 340, 365, and 369 each coordinate Zn(2+). Positions K398 to S402 match the 'KMSKS' region motif. K401 contributes to the ATP binding site.

This sequence belongs to the class-I aminoacyl-tRNA synthetase family. Zn(2+) serves as cofactor.

Its subcellular location is the cytoplasm. It carries out the reaction tRNA(Cys) + L-cysteine + ATP = L-cysteinyl-tRNA(Cys) + AMP + diphosphate. This is Cysteine--tRNA ligase, cytoplasmic (Aats-cys) from Drosophila pseudoobscura pseudoobscura (Fruit fly).